A 276-amino-acid polypeptide reads, in one-letter code: 4-deoxy-L-threo-5-hexosulose-uronate ketol-isomerase (276 aa).

Zn(2+) contacts are provided by H194, H196, E201, and H243.

The protein belongs to the KduI family. Requires Zn(2+) as cofactor.

The catalysed reaction is 5-dehydro-4-deoxy-D-glucuronate = 3-deoxy-D-glycero-2,5-hexodiulosonate. The protein operates within glycan metabolism; pectin degradation; 2-dehydro-3-deoxy-D-gluconate from pectin: step 4/5. Functionally, catalyzes the isomerization of 5-dehydro-4-deoxy-D-glucuronate to 3-deoxy-D-glycero-2,5-hexodiulosonate. The chain is 4-deoxy-L-threo-5-hexosulose-uronate ketol-isomerase from Caldicellulosiruptor bescii (strain ATCC BAA-1888 / DSM 6725 / KCTC 15123 / Z-1320) (Anaerocellum thermophilum).